The following is a 762-amino-acid chain: MGSLRPPQGLGLQWSSFFLGKKGPGLTVSLPLLASSLQVNFRSPRSGQRCWAARTSVEKRLVVLVTLLAAGLVACLAALGIQYRTRTPPVCLTEACVSVTSSILNSMDPTVDPCQDFFSYACGGWIKANPVPDGHSRWGTFSNLWEHNQAIIKHLLENSTASASEAEKKAQVYYRACMNETRIEELRAKPLMELIEKLGGWNITGPWAKDNFQDTLQVVTAHYRTSPFFSVYVSADSKNSNSNVIQVDQSGLGLPSRDYYLNKTENEKVLTGYLNYMVQLGKLLGGGDEDSIRPQMQQILDFETALANITIPQEKRRDEELIYHKVTAAELQTLAPAINWLPFLNAIFYPVEINESEPIVVYDKEYLRQVSTLINSTDKCLLNNYMMWNLVRKTSSFLDQRFQDADEKFMEVMYGTKKTCLPRWKFCVSDTENNLGFALGPMFVKATFAEDSKNIASEIILEIKKAFEESLSTLKWMDEDTRRSAKEKADAIYNMIGYPNFIMDPKELDKVFNDYTAVPDLYFENAMRFFNFSLRVTADQLRKAPNRDQWSMTPPMVNAYYSPTKNEIVFPAGILQAPFYTRSSPNALNFGGIGVVVGHELTHAFDDQGREYDKDGNLRPWWKNSSVEAFKQQTECMVQQYNNYSVNGEPVNGRHTLGENIADNGGLKAAYRAYQNWVKKNGAEQILPTLGLTSNQLFFLGFAQVWCSVRTPESSHEGLITDPHSPSRFRVIGSLSNSKEFSEHFRCPLGSPMNPRHKCEVW.

Residues 1 to 60 (MGSLRPPQGLGLQWSSFFLGKKGPGLTVSLPLLASSLQVNFRSPRSGQRCWAARTSVEKR) are Cytoplasmic-facing. A helical; Signal-anchor for type II membrane protein membrane pass occupies residues 61 to 81 (LVVLVTLLAAGLVACLAALGI). Residues 82 to 762 (QYRTRTPPVC…MNPRHKCEVW (681 aa)) are Extracellular-facing. One can recognise a Peptidase M13 domain in the interval 90 to 762 (VCLTEACVSV…MNPRHKCEVW (673 aa)). Cystine bridges form between Cys-91-Cys-96, Cys-114-Cys-747, Cys-122-Cys-707, Cys-177-Cys-427, and Cys-636-Cys-759. 8 N-linked (GlcNAc...) asparagine glycosylation sites follow: Asn-158, Asn-179, Asn-202, Asn-262, Asn-308, Asn-354, Asn-375, and Asn-531. His-599 contributes to the Zn(2+) binding site. Glu-600 is an active-site residue. His-603 is a binding site for Zn(2+). N-linked (GlcNAc...) asparagine glycans are attached at residues Asn-624 and Asn-643. Glu-659 contacts Zn(2+). Asp-663 acts as the Proton donor in catalysis.

It belongs to the peptidase M13 family. Homodimer; disulfide-linked. Interacts with PPP1R16B. Interacts with TSPAN8; this interaction recruits the endothelin converting enzyme ECE1 to tetraspanin-enriched microdomains and positively modulates its enzymatic activity. The cofactor is Zn(2+). As to expression, all isoforms are expressed in aortic endothelial cells. Isoform A is also expressed in liver; isoform B in smooth muscle cells and fibroblasts; isoform C in aortic endothelial cells, smooth muscle cells, fibroblasts, liver and lung, and isoform D in smooth muscle cells.

The protein localises to the cell membrane. The catalysed reaction is Hydrolysis of the 21-Trp-|-Val-22 bond in big endothelin to form endothelin 1.. With respect to regulation, inhibited by phosphoramidon. Functionally, converts big endothelin-1 to endothelin-1. This Rattus norvegicus (Rat) protein is Endothelin-converting enzyme 1 (Ece1).